A 449-amino-acid polypeptide reads, in one-letter code: Xylose isomerase (449 aa).

Residues histidine 103 and aspartate 106 contribute to the active site. Residues glutamate 234, glutamate 270, histidine 273, aspartate 298, aspartate 309, aspartate 311, and aspartate 342 each coordinate Mg(2+).

Belongs to the xylose isomerase family. Homotetramer. It depends on Mg(2+) as a cofactor.

The protein localises to the cytoplasm. The enzyme catalyses alpha-D-xylose = alpha-D-xylulofuranose. This Levilactobacillus brevis (strain ATCC 367 / BCRC 12310 / CIP 105137 / JCM 1170 / LMG 11437 / NCIMB 947 / NCTC 947) (Lactobacillus brevis) protein is Xylose isomerase.